The following is a 228-amino-acid chain: Leucine rich adaptor protein 1-like (228 aa).

Met-1 carries the post-translational modification N-acetylmethionine. Positions 1–89 are disordered; it reads MEDSPLPDLR…GSPRGSHSSA (89 aa). 2 stretches are compositionally biased toward basic and acidic residues: residues 8-21 and 28-42; these read DLRD…RKVP and LRGE…DRDP. Gly residues predominate over residues 44-56; it reads GGSGGGGGGGGGC. Over residues 57–88 the composition is skewed to low complexity; the sequence is SSSSSYCSFPPSLSSSSSSSPTSGSPRGSHSS.

The chain is Leucine rich adaptor protein 1-like (LURAP1L) from Homo sapiens (Human).